Here is a 665-residue protein sequence, read N- to C-terminus: Macrolide export ATP-binding/permease protein MacB (665 aa).

Residues 17 to 255 (MQVKGLIREF…AAQPASIIDK (239 aa)) form the ABC transporter domain. 53 to 60 (GQSGSGKS) serves as a coordination point for ATP. 4 consecutive transmembrane segments (helical) span residues 287-307 (LLTM…VGLG), 544-564 (IAII…LVSV), 588-608 (FLIE…GLAF), and 630-650 (SIIA…FLPA).

It belongs to the ABC transporter superfamily. Macrolide exporter (TC 3.A.1.122) family. In terms of assembly, homodimer. Part of the tripartite efflux system MacAB-TolC, which is composed of an inner membrane transporter, MacB, a periplasmic membrane fusion protein, MacA, and an outer membrane component, TolC. The complex forms a large protein conduit and can translocate molecules across both the inner and outer membranes. Interacts with MacA.

The protein resides in the cell inner membrane. Its function is as follows. Part of the tripartite efflux system MacAB-TolC. MacB is a non-canonical ABC transporter that contains transmembrane domains (TMD), which form a pore in the inner membrane, and an ATP-binding domain (NBD), which is responsible for energy generation. Confers resistance against macrolides. The protein is Macrolide export ATP-binding/permease protein MacB of Psychrobacter cryohalolentis (strain ATCC BAA-1226 / DSM 17306 / VKM B-2378 / K5).